Consider the following 325-residue polypeptide: MLLAPGDVIKRSSEELKQRQIQINLVDWTESEGGKENKTEPKEESKAEGSKDGEGTQSESGQKEEGGKETKDADVDRRIHTAVGSGSSTKGPGERANENADRGDGKVGGGGGDADAGVGATGTNGRRWVVLTEEIARAIESKYGTKIDVYRDEVPAQIIEVERSLQKELGISREGVAEQTERSRDLRRKEKNGTHAKAVERGGRKQRKESHGDAQREGVEEEKTSEEPARIGITIEGVMSQNKLLSMIGGVERKMAPIGARESAVMLVSNSIKDVVRATAYFTAPTGDPHWKEVAREASKKKNILAYTSTGGDAKTEFLHLIDHL.

Disordered stretches follow at residues 1–127 (MLLA…NGRR) and 174–230 (EGVA…EPAR). 4 stretches are compositionally biased toward basic and acidic residues: residues 8–18 (VIKRSSEELKQ), 32–54 (EGGK…KDGE), 61–79 (GQKE…DRRI), and 92–105 (PGER…RGDG). K106 provides a ligand contact to ATP. The span at 106-122 (KVGGGGGDADAGVGATG) shows a compositional bias: gly residues. Basic and acidic residues predominate over residues 175–229 (GVAEQTERSRDLRRKEKNGTHAKAVERGGRKQRKESHGDAQREGVEEEKTSEEPA).

This sequence belongs to the orbivirus VP6 family. In terms of assembly, homohexamer.

It is found in the virion. The catalysed reaction is ATP + H2O = ADP + phosphate + H(+). ATP dependent RNA helicase essential for RNA packaging and viral transcription. Possesses ss- and dsRNA-binding capacity. In Bluetongue virus 13 (isolate USA) (BTV 13), this protein is Helicase VP6-A (Segment-9).